A 363-amino-acid chain; its full sequence is Peptide chain release factor 1 (363 aa).

Gln237 is modified (N5-methylglutamine). Residues 286 to 295 are compositionally biased toward basic and acidic residues; that stretch reads EKRRSAEATT. The segment at 286–305 is disordered; sequence EKRRSAEATTRRNLVGSGDR.

It belongs to the prokaryotic/mitochondrial release factor family. In terms of processing, methylated by PrmC. Methylation increases the termination efficiency of RF1.

Its subcellular location is the cytoplasm. Its function is as follows. Peptide chain release factor 1 directs the termination of translation in response to the peptide chain termination codons UAG and UAA. This chain is Peptide chain release factor 1, found in Shewanella amazonensis (strain ATCC BAA-1098 / SB2B).